The following is a 198-amino-acid chain: MAKLYFNYSTMNAGKSTVLLQASHNYRERGMQTYLMTAAIDGRAGTGRIASRIGIGAEADIFTPRDDVFAMIRDRLGAGPVACVFVDEAQFLSPEQVWQLARVVDDLDVPVLAYGLRVDFQGKLFPGSATLLALADEMREVRTICKCGRKATMVIRQDASGRAITEGAQVQIGGNETYVSLCRKHWREATGDPGAKGH.

Residues 9-16 (STMNAGKS) and 87-90 (DEAQ) each bind ATP. Glu-88 functions as the Proton acceptor in the catalytic mechanism. The Zn(2+) site is built by Cys-145, Cys-147, Cys-182, and His-185.

It belongs to the thymidine kinase family. As to quaternary structure, homotetramer.

The protein localises to the cytoplasm. It catalyses the reaction thymidine + ATP = dTMP + ADP + H(+). The polypeptide is Thymidine kinase (Ruegeria pomeroyi (strain ATCC 700808 / DSM 15171 / DSS-3) (Silicibacter pomeroyi)).